The primary structure comprises 417 residues: Lissencephaly-1 homolog (417 aa).

A LisH domain is found at 7-39; sequence QKEELNGAILDYFDSSGYKLTSTEFTKETNIEL. Residues 52 to 80 adopt a coiled-coil conformation; it reads TSVIRLQKKVMDLEAKVSQLEEELNNGGR. The segment at 72-93 is disordered; it reads EEELNNGGRGPARRGKEDALPR. WD repeat units lie at residues 102 to 143, 144 to 185, 186 to 225, 228 to 267, 270 to 339, 342 to 383, and 385 to 417; these read GHRN…RTLK, GHTN…KTLH, GHDH…CTKT, GHED…CLLT, EHSH…CLQT, GHDN…KTIN, and AHSH…WKLG.

The protein belongs to the WD repeat LIS1/nudF family.

The protein localises to the cytoplasm. The protein resides in the cytoskeleton. It localises to the microtubule organizing center. It is found in the centrosome. Functionally, positively regulates the activity of the minus-end directed microtubule motor protein dynein. May enhance dynein-mediated microtubule sliding by targeting dynein to the microtubule plus end. Required for several dynein- and microtubule-dependent processes. This chain is Lissencephaly-1 homolog, found in Heterostelium pallidum (strain ATCC 26659 / Pp 5 / PN500) (Cellular slime mold).